Consider the following 40-residue polypeptide: Allophycocyanin alpha-B chain (40 aa).

It belongs to the phycobiliprotein family. In terms of assembly, heterodimer of an alpha and a beta chain. Post-translationally, contains one covalently linked bilin chromophore.

It is found in the cellular thylakoid membrane. Functionally, light-harvesting photosynthetic bile pigment-protein from the phycobiliprotein complex. Allophycocyanin has a maximum absorption at approximately 650 nanometers. The polypeptide is Allophycocyanin alpha-B chain (Mastigocladus laminosus (Fischerella sp.)).